We begin with the raw amino-acid sequence, 503 residues long: Maturase K (503 aa).

The protein belongs to the intron maturase 2 family. MatK subfamily.

The protein resides in the plastid. The protein localises to the chloroplast. Usually encoded in the trnK tRNA gene intron. Probably assists in splicing its own and other chloroplast group II introns. The chain is Maturase K from Purshia tridentata (Antelope bitterbrush).